Reading from the N-terminus, the 450-residue chain is UDP-N-acetylmuramoylalanine--D-glutamate ligase (450 aa).

115 to 121 (GTNGKTT) is an ATP binding site.

Belongs to the MurCDEF family.

Its subcellular location is the cytoplasm. The enzyme catalyses UDP-N-acetyl-alpha-D-muramoyl-L-alanine + D-glutamate + ATP = UDP-N-acetyl-alpha-D-muramoyl-L-alanyl-D-glutamate + ADP + phosphate + H(+). It functions in the pathway cell wall biogenesis; peptidoglycan biosynthesis. Functionally, cell wall formation. Catalyzes the addition of glutamate to the nucleotide precursor UDP-N-acetylmuramoyl-L-alanine (UMA). This Desulfatibacillum aliphaticivorans protein is UDP-N-acetylmuramoylalanine--D-glutamate ligase.